The primary structure comprises 644 residues: 1-deoxy-D-xylulose-5-phosphate synthase (644 aa).

Residues His-72 and 113–115 (GHA) each bind thiamine diphosphate. Position 144 (Asp-144) interacts with Mg(2+). Residues 145-146 (GA), Asn-174, Tyr-287, and Glu-370 each bind thiamine diphosphate. Residue Asn-174 coordinates Mg(2+).

The protein belongs to the transketolase family. DXPS subfamily. In terms of assembly, homodimer. It depends on Mg(2+) as a cofactor. The cofactor is thiamine diphosphate.

The catalysed reaction is D-glyceraldehyde 3-phosphate + pyruvate + H(+) = 1-deoxy-D-xylulose 5-phosphate + CO2. The protein operates within metabolic intermediate biosynthesis; 1-deoxy-D-xylulose 5-phosphate biosynthesis; 1-deoxy-D-xylulose 5-phosphate from D-glyceraldehyde 3-phosphate and pyruvate: step 1/1. Functionally, catalyzes the acyloin condensation reaction between C atoms 2 and 3 of pyruvate and glyceraldehyde 3-phosphate to yield 1-deoxy-D-xylulose-5-phosphate (DXP). The protein is 1-deoxy-D-xylulose-5-phosphate synthase of Prochlorococcus marinus (strain MIT 9303).